A 307-amino-acid polypeptide reads, in one-letter code: Protein ORANGE, chloroplastic (307 aa).

The transit peptide at 1 to 55 directs the protein to the chloroplast; sequence MSSLGRILSVSYPPDPYTWRFSQYKLSSSLGRNRRLRWRFTALDPESSSLDSESS. Lysine 58 is covalently cross-linked (Glycyl lysine isopeptide (Lys-Gly) (interchain with G-Cter in ubiquitin)). A run of 2 helical transmembrane segments spans residues 146–166 and 199–219; these read VYYA…GLLA and IVAS…VVEV. Positions 208 to 299 are CR-type-like; it reads VGVISALMVV…CTGMAMASEH (92 aa). A CXXCXGXG motif repeat occupies 230–237; that stretch reads CKYCLGTG. One copy of the CXXCXXXG motif repeat lies at 241–248; it reads CARCSSTG. A CXXCXGXG motif repeat occupies 274–281; it reads CSNCSGAG. The CXXCXXXG motif repeat unit spans residues 285–292; sequence CPTCLCTG.

It belongs to the orange-like family. Interacts with the phytoene synthase PSY1 in chloroplast. Binds to the eukaryotic release factor eRF1-2. Interacts with the transcription factor TCP14 in the nucleus to repress chloroplast biogenesis in etiolated seedlings. Associates to the E2 ubiquitin-conjugating enzyme UBC19. In terms of processing, ubiquitination at K-58 by UBC19 is essential for nuclear localization.

Its subcellular location is the plastid. It localises to the chloroplast membrane. The protein resides in the nucleus. The protein localises to the cytoplasm. Functionally, involved in chromoplast differentiation. Associated with a cellular process that triggers the differentiation of pro-plastids or other non-colored plastids into chromoplasts for carotenoid accumulation. Is associated with carotenoid accumulation in chromoplasts. Functions as a major regulator of the phytoene synthase PSY1 protein level and activity. Modulates carotenoid biosynthesis by means of post-transcriptional regulation of PSY1. Modulates carotenoid biosynthesis in part by up-regulating a series of endogenous carotenogenic genes. Regulates cell elongation in the petiole in an eRF1-2-dependent manner. Binds to and represses TCP14 transactivation activity, thus preventing early light-induced proteins (ELIPs, e.g. ELIP1 and ELIP2) expression and delaying chloroplast biogenesis (e.g. lower chlorophyll biosynthesis and slower development of thylakoid membranes) in germinating cotyledons and etiolated seedlings; reduced levels upon illumination combined to TCP14 accumulation derepress chloroplast biogenesis during deetiolation. The chain is Protein ORANGE, chloroplastic from Arabidopsis thaliana (Mouse-ear cress).